The sequence spans 364 residues: Probable UDP-arabinopyranose mutase 1 (364 aa).

The short motif at 103–105 (DDD) is the DXD motif element. N-linked (Glc...) arginine glycosylation occurs at Arg151.

It belongs to the RGP family. Homopentamer or homohexamer. The cofactor is Mn(2+). Requires Mg(2+) as cofactor. Reversibly glycosylated by UDP-glucose, UDP-xylose and UDP-galactose, but not UDP-mannose.

It is found in the secreted. The protein resides in the cell wall. It localises to the cell junction. Its subcellular location is the plasmodesma. The protein localises to the golgi apparatus. The catalysed reaction is UDP-beta-L-arabinofuranose = UDP-beta-L-arabinopyranose. With respect to regulation, inhibited by inhibitor protein (IP) which may be a form of sucrose synthase. Its function is as follows. Probable UDP-L-arabinose mutase involved in the biosynthesis of cell wall non-cellulosic polysaccharides. Was initially shown to possess an autoglycosylating activity which is dependent on the presence of UDP-glucose and manganese. The chain is Probable UDP-arabinopyranose mutase 1 from Pisum sativum (Garden pea).